Here is an 89-residue protein sequence, read N- to C-terminus: Small ribosomal subunit protein uS14 (89 aa).

The protein belongs to the universal ribosomal protein uS14 family. Part of the 30S ribosomal subunit. Contacts proteins S3 and S10.

In terms of biological role, binds 16S rRNA, required for the assembly of 30S particles and may also be responsible for determining the conformation of the 16S rRNA at the A site. This is Small ribosomal subunit protein uS14 from Acholeplasma laidlawii (strain PG-8A).